A 367-amino-acid polypeptide reads, in one-letter code: Peptide chain release factor 2 (367 aa).

Position 254 is an N5-methylglutamine (Q254).

This sequence belongs to the prokaryotic/mitochondrial release factor family. Methylated by PrmC. Methylation increases the termination efficiency of RF2.

It localises to the cytoplasm. Its function is as follows. Peptide chain release factor 2 directs the termination of translation in response to the peptide chain termination codons UGA and UAA. The protein is Peptide chain release factor 2 of Leptospira interrogans serogroup Icterohaemorrhagiae serovar copenhageni (strain Fiocruz L1-130).